The following is a 389-amino-acid chain: Arginine biosynthesis bifunctional protein ArgJ (389 aa).

Substrate is bound by residues threonine 150, lysine 173, threonine 184, glutamate 263, asparagine 384, and threonine 389. The active-site Nucleophile is the threonine 184.

The protein belongs to the ArgJ family. In terms of assembly, heterotetramer of two alpha and two beta chains.

It is found in the cytoplasm. It carries out the reaction N(2)-acetyl-L-ornithine + L-glutamate = N-acetyl-L-glutamate + L-ornithine. The catalysed reaction is L-glutamate + acetyl-CoA = N-acetyl-L-glutamate + CoA + H(+). It functions in the pathway amino-acid biosynthesis; L-arginine biosynthesis; L-ornithine and N-acetyl-L-glutamate from L-glutamate and N(2)-acetyl-L-ornithine (cyclic): step 1/1. It participates in amino-acid biosynthesis; L-arginine biosynthesis; N(2)-acetyl-L-ornithine from L-glutamate: step 1/4. Functionally, catalyzes two activities which are involved in the cyclic version of arginine biosynthesis: the synthesis of N-acetylglutamate from glutamate and acetyl-CoA as the acetyl donor, and of ornithine by transacetylation between N(2)-acetylornithine and glutamate. This Deinococcus radiodurans (strain ATCC 13939 / DSM 20539 / JCM 16871 / CCUG 27074 / LMG 4051 / NBRC 15346 / NCIMB 9279 / VKM B-1422 / R1) protein is Arginine biosynthesis bifunctional protein ArgJ.